The chain runs to 220 residues: UPF0502 protein VV2_0756 (220 aa).

The protein belongs to the UPF0502 family.

The sequence is that of UPF0502 protein VV2_0756 from Vibrio vulnificus (strain CMCP6).